The following is a 191-amino-acid chain: dTTP/UTP pyrophosphatase (191 aa).

The active-site Proton acceptor is Asp71.

It belongs to the Maf family. YhdE subfamily. A divalent metal cation is required as a cofactor.

Its subcellular location is the cytoplasm. The catalysed reaction is dTTP + H2O = dTMP + diphosphate + H(+). It catalyses the reaction UTP + H2O = UMP + diphosphate + H(+). Its function is as follows. Nucleoside triphosphate pyrophosphatase that hydrolyzes dTTP and UTP. May have a dual role in cell division arrest and in preventing the incorporation of modified nucleotides into cellular nucleic acids. The protein is dTTP/UTP pyrophosphatase of Geobacter sulfurreducens (strain ATCC 51573 / DSM 12127 / PCA).